Consider the following 184-residue polypeptide: Photosystem I assembly protein Ycf4 (184 aa).

The next 2 membrane-spanning stretches (helical) occupy residues 19–39 (LSNFCWALILFLGSLGFLLVG) and 57–77 (FIFFPQGIVMSFYGIAGLFIS).

Belongs to the Ycf4 family.

The protein localises to the plastid. It localises to the chloroplast thylakoid membrane. Its function is as follows. Seems to be required for the assembly of the photosystem I complex. The sequence is that of Photosystem I assembly protein Ycf4 from Jasminum nudiflorum (Winter jasmine).